A 589-amino-acid polypeptide reads, in one-letter code: uncharacterized protein (589 aa).

The next 14 membrane-spanning stretches (helical) occupy residues 90-110 (YIVI…QTVI), 128-148 (SWIG…CGIM), 162-182 (IVLF…LWLV), 189-209 (GIGG…ITPL), 217-237 (GCMG…GGAI), 245-265 (WIFF…IFFL), 284-304 (FVGI…LNIG), 311-331 (AHAN…GFVV), 355-375 (VMVT…YIPI), 390-410 (VHTL…GMGI), 418-438 (YPMI…IAIY), 448-468 (GFLA…LIAI), 483-503 (AFML…AVIY), and 545-565 (IRTI…LSFF).

The protein belongs to the major facilitator superfamily. TCR/Tet family.

The protein localises to the membrane. This is an uncharacterized protein from Schizosaccharomyces pombe (strain 972 / ATCC 24843) (Fission yeast).